A 295-amino-acid chain; its full sequence is Cytidine deaminase (295 aa).

CMP/dCMP-type deaminase domains are found at residues 48–168 (EDAD…FGPA) and 187–295 (DDDE…YLSL). 89 to 91 (NME) contacts substrate. Position 102 (His102) interacts with Zn(2+). Glu104 (proton donor) is an active-site residue. Zn(2+) contacts are provided by Cys129 and Cys132.

This sequence belongs to the cytidine and deoxycytidylate deaminase family. As to quaternary structure, homodimer. Requires Zn(2+) as cofactor.

It carries out the reaction cytidine + H2O + H(+) = uridine + NH4(+). The enzyme catalyses 2'-deoxycytidine + H2O + H(+) = 2'-deoxyuridine + NH4(+). This enzyme scavenges exogenous and endogenous cytidine and 2'-deoxycytidine for UMP synthesis. This is Cytidine deaminase from Vibrio cholerae serotype O1 (strain ATCC 39315 / El Tor Inaba N16961).